A 32-amino-acid polypeptide reads, in one-letter code: MSDIN-like toxin proprotein 1 (32 aa).

The propeptide occupies Met1–Pro10. Positions Gly11–Pro18 form a cross-link, cyclopeptide (Gly-Pro). The propeptide occupies Cys19–Glu32.

This sequence belongs to the MSDIN fungal toxin family. Processed by the macrocyclase-peptidase enzyme POPB to yield a toxic cyclic octapeptide. POPB first removes 10 residues from the N-terminus. Conformational trapping of the remaining peptide forces the enzyme to release this intermediate rather than proceed to macrocyclization. The enzyme rebinds the remaining peptide in a different conformation and catalyzes macrocyclization of the N-terminal 8 residues.

Functionally, probable toxin that belongs to the MSDIN-like toxin family responsible for a large number of food poisoning cases and deaths. This is MSDIN-like toxin proprotein 1 from Amanita bisporigera (Destroying angel).